The following is a 557-amino-acid chain: Hdr-like menaquinol oxidoreductase iron-sulfur subunit (557 aa).

2 4Fe-4S ferredoxin-type domains span residues R86 to K115 and K155 to V184. Residues C95, C98, C101, C105, C164, C167, C170, and C174 each coordinate [4Fe-4S] cluster.

[4Fe-4S] cluster is required as a cofactor.

It is found in the membrane. Has menaquinol-oxidizing activity. The HmeC and HmeD subunits may together mediate electron transfer from menaquinol to an unidentified electron acceptor on the cytoplasmic side of the membrane. The polypeptide is Hdr-like menaquinol oxidoreductase iron-sulfur subunit (hmeD) (Archaeoglobus profundus (strain DSM 5631 / JCM 9629 / NBRC 100127 / Av18)).